We begin with the raw amino-acid sequence, 311 residues long: Olfactory receptor 5AN1 (311 aa).

The Extracellular portion of the chain corresponds to 1–26 (MTGGGNITEITYFILLGFSDFPRIIK). N-linked (GlcNAc...) asparagine glycosylation is present at asparagine 6. The chain crosses the membrane as a helical span at residues 27 to 47 (VLFTIFLVIYITSLAWNLSLI). The Cytoplasmic portion of the chain corresponds to 48-55 (VLIRMDSH). Residues 56-76 (LHTPMYFFLSNLSFIDVCYIS) form a helical membrane-spanning segment. Over 77 to 100 (STVPKMLSNLLQEQQTITFVGCII) the chain is Extracellular. A disulfide bond links cysteine 98 and cysteine 190. Residues 101 to 121 (QYFIFSTMGLSESCLMTAMAY) form a helical membrane-spanning segment. Residues 122–134 (DRYAAICNPLLYS) lie on the Cytoplasmic side of the membrane. The helical transmembrane segment at 135-155 (SIMSPTLCVWMVLGAYMTGLT) threads the bilayer. Topologically, residues 156 to 197 (ASLFQIGALLQLHFCGSNVIRHFFCDMPQLLILSCTDTFFVQ) are extracellular. Residues 198–218 (VMTAILTMFFGIASALVIMIS) traverse the membrane as a helical segment. Residues 219–238 (YGYIGISIMKITSAKGRSKA) are Cytoplasmic-facing. Residues 239 to 259 (FNTCASHLTAVSLFYTSGIFV) traverse the membrane as a helical segment. The Extracellular segment spans residues 260 to 272 (YLSSSSGGSSSFD). Residues 273–293 (RFASVFYTVVIPMLNPLIYSL) traverse the membrane as a helical segment. Over 294 to 311 (RNKEIKDALKRLQKRKCC) the chain is Cytoplasmic.

The protein belongs to the G-protein coupled receptor 1 family.

The protein localises to the cell membrane. Its function is as follows. Odorant receptor for musk, which specifically recognizes muscone, musk xylol, and musk ketone. Ligand-binding causes a conformation change that triggers signaling via G(s)-class of G alpha protein GNAL, activating adenylyl cyclase. The chain is Olfactory receptor 5AN1 from Homo sapiens (Human).